A 242-amino-acid chain; its full sequence is Mediator of RNA polymerase II transcription subunit 19-A (242 aa).

The span at 1–15 (MTEIFSTLFGQNDAQ) shows a compositional bias: polar residues. 2 disordered regions span residues 1 to 33 (MTEI…PPPS) and 171 to 242 (PPKK…NSLR). The segment covering 171-184 (PPKKKSKHKHRHHH) has biased composition (basic residues). Basic and acidic residues predominate over residues 193–210 (TRTDPTKKKKKKDNEPER). A compositionally biased stretch (basic residues) spans 211-223 (RKKKKDKKKKKNR). Over residues 232–242 (TGSQPNSNSLR) the composition is skewed to polar residues.

Belongs to the Mediator complex subunit 19 family. In terms of assembly, component of the Mediator complex.

Its subcellular location is the nucleus. Functionally, component of the Mediator complex, a coactivator involved in the regulated transcription of nearly all RNA polymerase II-dependent genes. Mediator functions as a bridge to convey information from gene-specific regulatory proteins to the basal RNA polymerase II transcription machinery. Mediator is recruited to promoters by direct interactions with regulatory proteins and serves as a scaffold for the assembly of a functional preinitiation complex with RNA polymerase II and the general transcription factors. The chain is Mediator of RNA polymerase II transcription subunit 19-A (med19a) from Danio rerio (Zebrafish).